The following is a 498-amino-acid chain: Germ cell-less protein-like 2 (498 aa).

The Nuclear localization signal signature appears at 33 to 39 (SRKRKRN). A BTB domain is found at 90–160 (SDIKIRALGR…LYTDADLSIT (71 aa)).

As to quaternary structure, interacts with CUL3.

Its subcellular location is the nucleus matrix. Its pathway is protein modification; protein ubiquitination. Functionally, possible function in spermatogenesis. Probable substrate-specific adapter of an E3 ubiquitin-protein ligase complex which mediates the ubiquitination and subsequent proteasomal degradation of target proteins. The polypeptide is Germ cell-less protein-like 2 (Gmcl2) (Mus musculus (Mouse)).